Reading from the N-terminus, the 25-residue chain is Caerin-1.9 (25 aa).

The residue at position 25 (L25) is a Leucine amide.

It belongs to the frog skin active peptide (FSAP) family. Caerin subfamily. In terms of tissue distribution, expressed by the skin dorsal glands.

Its subcellular location is the secreted. Antimicrobial peptide. Adopts an alpha helical conformation which can disrupt bacterial membranes. Strongly inhibits the formation of NO by neuronal nitric oxide synthase (nNOS) at micromolar concentrations. Acts by a non-competitive mechanism, probably by binding to calcium/calmodulin and as a consequence blocking calmodulin attachment to nNOS. This chain is Caerin-1.9, found in Ranoidea chloris (Red-eyed tree frog).